The primary structure comprises 101 residues: Small ribosomal subunit protein uS14 (101 aa).

This sequence belongs to the universal ribosomal protein uS14 family. As to quaternary structure, part of the 30S ribosomal subunit. Contacts proteins S3 and S10.

In terms of biological role, binds 16S rRNA, required for the assembly of 30S particles and may also be responsible for determining the conformation of the 16S rRNA at the A site. This chain is Small ribosomal subunit protein uS14, found in Shewanella frigidimarina (strain NCIMB 400).